We begin with the raw amino-acid sequence, 363 residues long: LIM and cysteine-rich domains protein 1 (363 aa).

Ser16 bears the Phosphoserine mark. The PET domain occupies 99-206 (MIMTNPIATG…GEVALPGQGG (108 aa)). The segment at 200–234 (ALPGQGGLPKEEGKQQEKPEGAETAPPTTNGSIGD) is disordered. The segment covering 208–220 (PKEEGKQQEKPEG) has biased composition (basic and acidic residues). 2 consecutive LIM zinc-binding domains span residues 239–304 (YVCE…SLRP) and 305–363 (RCSG…SKRS).

Interacts with beta-dystroglycan. Interacts with GATA1, GATA4 and GATA6.

It is found in the cytoplasm. Its subcellular location is the nucleus. Functionally, transcriptional cofactor that restricts GATA6 function by inhibiting DNA-binding, resulting in repression of GATA6 transcriptional activation of downstream target genes. Represses GATA6-mediated trans activation of lung- and cardiac tissue-specific promoters. Inhibits DNA-binding by GATA4 and GATA1 to the cTNC promoter. Plays a critical role in the development of cardiac hypertrophy via activation of calcineurin/nuclear factor of activated T-cells signaling pathway. The sequence is that of LIM and cysteine-rich domains protein 1 (LMCD1) from Bos taurus (Bovine).